The primary structure comprises 128 residues: Fluoride-specific ion channel FluC (128 aa).

Transmembrane regions (helical) follow at residues 5 to 25 (IVAIFVGAGLGALLRWFLSIG), 35 to 55 (LGTLVSNLIGGYLIGIAVVAF), 67 to 87 (LFVITGFMGGLTTFSTYSVEV), and 96 to 116 (FGWALAVAALHLIGSFTLTGL). Positions 75 and 78 each coordinate Na(+).

Belongs to the fluoride channel Fluc/FEX (TC 1.A.43) family.

It localises to the cell inner membrane. The catalysed reaction is fluoride(in) = fluoride(out). Its activity is regulated as follows. Na(+) is not transported, but it plays an essential structural role and its presence is essential for fluoride channel function. Fluoride-specific ion channel. Important for reducing fluoride concentration in the cell, thus reducing its toxicity. This Burkholderia thailandensis (strain ATCC 700388 / DSM 13276 / CCUG 48851 / CIP 106301 / E264) protein is Fluoride-specific ion channel FluC.